A 200-amino-acid chain; its full sequence is GTP cyclohydrolase 1 (200 aa).

Positions 87, 90, and 158 each coordinate Zn(2+).

The protein belongs to the GTP cyclohydrolase I family. As to quaternary structure, toroid-shaped homodecamer, composed of two pentamers of five dimers.

It catalyses the reaction GTP + H2O = 7,8-dihydroneopterin 3'-triphosphate + formate + H(+). Its pathway is cofactor biosynthesis; 7,8-dihydroneopterin triphosphate biosynthesis; 7,8-dihydroneopterin triphosphate from GTP: step 1/1. The sequence is that of GTP cyclohydrolase 1 from Xanthomonas axonopodis pv. citri (strain 306).